The chain runs to 176 residues: Crossover junction endodeoxyribonuclease RuvC (176 aa).

Active-site residues include Asp-10, Glu-69, and Asp-141. Mg(2+) is bound by residues Asp-10, Glu-69, and Asp-141.

It belongs to the RuvC family. Homodimer which binds Holliday junction (HJ) DNA. The HJ becomes 2-fold symmetrical on binding to RuvC with unstacked arms; it has a different conformation from HJ DNA in complex with RuvA. In the full resolvosome a probable DNA-RuvA(4)-RuvB(12)-RuvC(2) complex forms which resolves the HJ. Mg(2+) serves as cofactor.

The protein resides in the cytoplasm. The catalysed reaction is Endonucleolytic cleavage at a junction such as a reciprocal single-stranded crossover between two homologous DNA duplexes (Holliday junction).. The RuvA-RuvB-RuvC complex processes Holliday junction (HJ) DNA during genetic recombination and DNA repair. Endonuclease that resolves HJ intermediates. Cleaves cruciform DNA by making single-stranded nicks across the HJ at symmetrical positions within the homologous arms, yielding a 5'-phosphate and a 3'-hydroxyl group; requires a central core of homology in the junction. The consensus cleavage sequence is 5'-(A/T)TT(C/G)-3'. Cleavage occurs on the 3'-side of the TT dinucleotide at the point of strand exchange. HJ branch migration catalyzed by RuvA-RuvB allows RuvC to scan DNA until it finds its consensus sequence, where it cleaves and resolves the cruciform DNA. The polypeptide is Crossover junction endodeoxyribonuclease RuvC (Dichelobacter nodosus (strain VCS1703A)).